A 102-amino-acid chain; its full sequence is Aspartyl/glutamyl-tRNA(Asn/Gln) amidotransferase subunit C (102 aa).

This sequence belongs to the GatC family. As to quaternary structure, heterotrimer of A, B and C subunits.

It carries out the reaction L-glutamyl-tRNA(Gln) + L-glutamine + ATP + H2O = L-glutaminyl-tRNA(Gln) + L-glutamate + ADP + phosphate + H(+). The enzyme catalyses L-aspartyl-tRNA(Asn) + L-glutamine + ATP + H2O = L-asparaginyl-tRNA(Asn) + L-glutamate + ADP + phosphate + 2 H(+). Functionally, allows the formation of correctly charged Asn-tRNA(Asn) or Gln-tRNA(Gln) through the transamidation of misacylated Asp-tRNA(Asn) or Glu-tRNA(Gln) in organisms which lack either or both of asparaginyl-tRNA or glutaminyl-tRNA synthetases. The reaction takes place in the presence of glutamine and ATP through an activated phospho-Asp-tRNA(Asn) or phospho-Glu-tRNA(Gln). The chain is Aspartyl/glutamyl-tRNA(Asn/Gln) amidotransferase subunit C from Mycobacteroides abscessus (strain ATCC 19977 / DSM 44196 / CCUG 20993 / CIP 104536 / JCM 13569 / NCTC 13031 / TMC 1543 / L948) (Mycobacterium abscessus).